Consider the following 153-residue polypeptide: MIGLLQRVREARVEVAGEIVGRIGPGLLALVCAEQGDSEAQADKLLAKMLKLRIFSDEAGKMNRSVQDLDGQGTCGGLLIVSQFTLAADTRGGNRPSFTQAAPPAQGERLYDYFVAQARAVHPMVATGRFAADMQVHLVNDGPVTLPLRIAPG.

The Gly-cisPro motif, important for rejection of L-amino acids signature appears at 142-143 (GP).

This sequence belongs to the DTD family. Homodimer.

The protein localises to the cytoplasm. It catalyses the reaction glycyl-tRNA(Ala) + H2O = tRNA(Ala) + glycine + H(+). The enzyme catalyses a D-aminoacyl-tRNA + H2O = a tRNA + a D-alpha-amino acid + H(+). In terms of biological role, an aminoacyl-tRNA editing enzyme that deacylates mischarged D-aminoacyl-tRNAs. Also deacylates mischarged glycyl-tRNA(Ala), protecting cells against glycine mischarging by AlaRS. Acts via tRNA-based rather than protein-based catalysis; rejects L-amino acids rather than detecting D-amino acids in the active site. By recycling D-aminoacyl-tRNA to D-amino acids and free tRNA molecules, this enzyme counteracts the toxicity associated with the formation of D-aminoacyl-tRNA entities in vivo and helps enforce protein L-homochirality. In Acidovorax ebreus (strain TPSY) (Diaphorobacter sp. (strain TPSY)), this protein is D-aminoacyl-tRNA deacylase.